We begin with the raw amino-acid sequence, 382 residues long: Adenosine 3'-phospho 5'-phosphosulfate transporter 2 (382 aa).

A compositionally biased stretch (polar residues) spans Met1 to Gly10. The segment at Met1–Glu33 is disordered. Transmembrane regions (helical) follow at residues Leu56–Phe76, Pro83–Glu103, Val121–Leu141, Pro144–Ile164, Gly170–Ala190, Asn197–Gly217, Val234–Gly254, Phe271–Leu291, Leu299–Phe319, and Phe323–Tyr343.

It belongs to the nucleotide-sugar transporter family. SLC35B subfamily.

It is found in the golgi apparatus membrane. In terms of biological role, mediates the transport of adenosine 3'-phospho 5'-phosphosulfate (PAPS), from cytosol into Golgi. PAPS is a universal sulfuryl donor for sulfation events that take place in the Golgi. Essential for viability. Involved in glycosaminoglycan synthesis and the subsequent signaling. May be involved in hh and dpp signaling by controlling the sulfation of heparan sulfate (HS). This is Adenosine 3'-phospho 5'-phosphosulfate transporter 2 from Aedes aegypti (Yellowfever mosquito).